Consider the following 900-residue polypeptide: MKASEEEYRLNFFIKNDFKRKICKSCKTPFWTRDEKKEYCSDIPCTDYYFFDINIKSQPLTVKEAREKFLSFFEKRGHTRISPKPVLARWRDDLYLTIASIVDFQPHVTSGLVPPPANPLVVSQPSIRLEDIDNVGITFGRHLTTFEMAAHHAFNYPDHYVYWKDETTAYATEFFTKELGIPEEELNFKESWWEGGGNAGPCLEVTVGGLELATLVFMQYKITDNGNYTPLKLKIVDTGYGVERIAWITQKTPSAFHAIYGNLVYKFFNKIGVAYIDETLLKVASRFAGKIDPDNPDTIKIHRQMVSKELGIDIKAVEEELDRAAKVFQILDHTKTIMLMLADGLVPSNSGEGYLGRLVIRRALKVLRLLKSDVRLYELVKEQIDFWKEDFPQVLKNKDYILDAVELEQQRFEKILEKVPSIASTLARKSEITTEDLIQVYDSNGIPPDLLEEELKKKSVKFELPRNFYALVAKRHQTSTIKSVYDKVKLPKDMLEYITALQPTEKLYYKDQYMRSFEGKVLGVYKNYLILDKTTFYPEGGGQLGDTGLIIDEKSSKRYEVIDTQKVNDVIVHILKEEPSTIKVGDNVRGEINWERRYRLMRHHTVTHVILAAAKKVLGEHVWQAGAEKTPEKGRLDITHHKTLTEEEVKLIENYANSVISDRRPVKPLEMNRMEAEMKYGVSIYEGGVPNSATIRLLEIKDWDIESCGGTHVSNTSEIGAVKIINVERIQDGVIRLEYVAGPALVDYIRETEAKIVEASKIIGSSPDQLTSRLRRLLNEIEEKNNLIIQYRRIIETELLNNLKPYEINGNKIYIIEGLGDEEENKEILRKLTSTDNTIAISISDNRLQIATSKNMRVDKIVEELLKGGGKGGGKGTFANVILNSKKSKEEIIEIVRKSL.

Residues H604, H608, C708, and H712 each contribute to the Zn(2+) site.

The protein belongs to the class-II aminoacyl-tRNA synthetase family. The cofactor is Zn(2+).

The protein localises to the cytoplasm. The enzyme catalyses tRNA(Ala) + L-alanine + ATP = L-alanyl-tRNA(Ala) + AMP + diphosphate. Functionally, catalyzes the attachment of alanine to tRNA(Ala) in a two-step reaction: alanine is first activated by ATP to form Ala-AMP and then transferred to the acceptor end of tRNA(Ala). Also edits incorrectly charged Ser-tRNA(Ala) and Gly-tRNA(Ala) via its editing domain. This chain is Alanine--tRNA ligase, found in Saccharolobus islandicus (strain M.14.25 / Kamchatka #1) (Sulfolobus islandicus).